The sequence spans 143 residues: Large ribosomal subunit protein bL17 (143 aa).

The protein belongs to the bacterial ribosomal protein bL17 family. Part of the 50S ribosomal subunit. Contacts protein L32.

The polypeptide is Large ribosomal subunit protein bL17 (Chelativorans sp. (strain BNC1)).